The chain runs to 574 residues: Protein misato (574 aa).

It belongs to the misato family.

It is found in the mitochondrion. The protein is Protein misato (mst) of Drosophila melanogaster (Fruit fly).